The primary structure comprises 93 residues: MKISVAAIPFFLLITIALGTKTESSSRGPYHPSECCFTYTTYKIPRQRIMDYYETNSQCSKPGIVFITKRGHSVCTNPSDKWVQDYIKDMKEN.

The N-terminal stretch at 1–19 is a signal peptide; it reads MKISVAAIPFFLLITIALG. Serine 26 carries O-linked (GalNAc...) serine; partial glycosylation. 2 cysteine pairs are disulfide-bonded: cysteine 35-cysteine 59 and cysteine 36-cysteine 75.

This sequence belongs to the intercrine beta (chemokine CC) family. In terms of processing, the N-terminal processed forms HCC-1(3-74), HCC-1(4-74) and HCC-1(9-74) are produced in small amounts by proteolytic cleavage after secretion in blood. HCC-1(1-74), but not HCC-1(3-74) and HCC-1(4-74), is partially O-glycosylated; the O-linked glycan consists of one Gal-GalNAc disaccharide, further modified by two N-acetylneuraminic acids. Expressed constitutively in several normal tissues: spleen, liver, skeletal and heart muscle, gut, and bone marrow, present at high concentrations (1-80 nM) in plasma.

Its subcellular location is the secreted. Functionally, has weak activities on human monocytes and acts via receptors that also recognize MIP-1 alpha. It induces intracellular Ca(2+) changes and enzyme release, but no chemotaxis, at concentrations of 100-1,000 nM, and is inactive on T-lymphocytes, neutrophils, and eosinophil leukocytes. Enhances the proliferation of CD34 myeloid progenitor cells. The processed form HCC-1(9-74) is a chemotactic factor that attracts monocytes, eosinophils, and T-cells and is a ligand for CCR1, CCR3 and CCR5. The polypeptide is C-C motif chemokine 14 (CCL14) (Homo sapiens (Human)).